Here is a 462-residue protein sequence, read N- to C-terminus: Kinetochore protein Nuf2-A (462 aa).

2 coiled-coil regions span residues 143–277 (SSYK…DKCD) and 308–461 (EIHR…RLSR). The disordered stretch occupies residues 239-259 (RMKSQIVESPEQRKSKTERMK). Over residues 248-259 (PEQRKSKTERMK) the composition is skewed to basic and acidic residues.

The protein belongs to the NUF2 family. Component of the NDC80 complex, which is composed of ndc80, cdca1, spbc24 and spbc25. The NDC80 complex interacts with mis12 and zwint.

Its subcellular location is the nucleus. The protein localises to the chromosome. It localises to the centromere. It is found in the kinetochore. In terms of biological role, acts as a component of the essential kinetochore-associated NDC80 complex, which is required for chromosome segregation and spindle checkpoint activity. Required for kinetochore integrity and the organization of stable microtubule binding sites in the outer plate of the kinetochore. The NDC80 complex synergistically enhances the affinity of the SKA1 complex for microtubules and may allow the NDC80 complex to track depolymerizing microtubules. This is Kinetochore protein Nuf2-A (nuf2-a) from Xenopus laevis (African clawed frog).